The following is a 257-amino-acid chain: Small ribosomal subunit protein uS4c (257 aa).

2 S4 RNA-binding domains span residues 110-170 (MRLD…QLVN) and 189-255 (KTLP…KNYL).

It belongs to the universal ribosomal protein uS4 family. As to quaternary structure, part of the 30S ribosomal subunit. Contacts protein S5. The interaction surface between S4 and S5 is involved in control of translational fidelity.

The protein resides in the plastid. It is found in the chloroplast. In terms of biological role, one of the primary rRNA binding proteins, it binds directly to 16S rRNA where it nucleates assembly of the body of the 30S subunit. Functionally, with S5 and S12 plays an important role in translational accuracy. The protein is Small ribosomal subunit protein uS4c (rps4) of Chlamydomonas reinhardtii (Chlamydomonas smithii).